The following is a 294-amino-acid chain: Nucleotide-binding protein Reut_A0350 (294 aa).

Position 8–15 (8–15 (GISGSGKS)) interacts with ATP. 57–60 (DIRS) is a GTP binding site.

Belongs to the RapZ-like family.

Displays ATPase and GTPase activities. The polypeptide is Nucleotide-binding protein Reut_A0350 (Cupriavidus pinatubonensis (strain JMP 134 / LMG 1197) (Cupriavidus necator (strain JMP 134))).